The following is an 871-amino-acid chain: Protein pob1 (871 aa).

An SH3 domain is found at 2–65 (ASQRFVIALH…PASHVELISD (64 aa)). A disordered region spans residues 42–168 (WWEGEDEQGN…PSSDLSNFNT (127 aa)). Over residues 62–80 (LISDERSDSSDSRRGKEDF) the composition is skewed to basic and acidic residues. 2 stretches are compositionally biased toward low complexity: residues 88-100 (TRSS…STSS) and 109-124 (LYSN…SILN). Over residues 131–168 (SKPSVPSNFNSMFPSSKQEGPSPLLDNQPSSDLSNFNT) the composition is skewed to polar residues. Phosphoserine is present on residues S224 and S225. A Phosphotyrosine modification is found at Y229. Residue S241 is modified to Phosphoserine. The region spanning 250 to 313 (WSTEEVVEWL…LRKIQQLKDS (64 aa)) is the SAM domain. The segment covering 329-343 (ISVSQSSDSSSSIPK) has biased composition (low complexity). Disordered regions lie at residues 329–371 (ISVS…NRPT) and 384–670 (PDLD…KSKR). Polar residues-rich tracts occupy residues 384-395 (PDLDSSPSTDWN) and 404-451 (TPSS…NSGL). A phosphoserine mark is found at S433, S439, and S440. T442 bears the Phosphothreonine mark. Position 444 is a phosphoserine (S444). The span at 456-467 (TEPISSPSTSSI) shows a compositional bias: low complexity. Polar residues predominate over residues 492–511 (QPSSNVPTKFTGGASESSSV). S549 carries the post-translational modification Phosphoserine. Residues 549–560 (SPSSISSRLPSS) are compositionally biased toward low complexity. Composition is skewed to polar residues over residues 561–574 (NLEQ…TKSP) and 583–606 (KASS…NYAT). The PH domain maps to 698-808 (TADCHGWMRK…WSSAFLKATV (111 aa)).

The protein resides in the cytoplasm. Its subcellular location is the membrane. In terms of biological role, has a role in cell elongation and separation. In Schizosaccharomyces pombe (strain 972 / ATCC 24843) (Fission yeast), this protein is Protein pob1 (pob1).